Here is a 147-residue protein sequence, read N- to C-terminus: Large ribosomal subunit protein uL13 (147 aa).

It belongs to the universal ribosomal protein uL13 family. Part of the 50S ribosomal subunit.

In terms of biological role, this protein is one of the early assembly proteins of the 50S ribosomal subunit, although it is not seen to bind rRNA by itself. It is important during the early stages of 50S assembly. This Mycolicibacterium paratuberculosis (strain ATCC BAA-968 / K-10) (Mycobacterium paratuberculosis) protein is Large ribosomal subunit protein uL13.